The following is a 421-amino-acid chain: Cyclin-A2 (421 aa).

Met-1 carries the post-translational modification N-acetylmethionine. Positions 1 to 60 are disordered; it reads MPGSSRQSGREAGSALLSLQQEDQENVNPEKAAPDQRARAALKTGNARGNAPQQRLKARR. Residue Ser-5 is modified to Phosphoserine.

The protein belongs to the cyclin family. Cyclin AB subfamily. In terms of assembly, interacts with the CDK1 and CDK2 protein kinases to form serine/threonine kinase holoenzyme complexes. Interacts with CDK1 (hyperphosphorylated form in G1 and underphosphorylated forms in S and G2). Interacts with CDK2; the interaction increases from G1 to G2. Interacts (associated with CDK2 but not with CDK1) with SCAPER; regulates the activity of CCNA2/CDK2 by transiently maintaining CCNA2 in the cytoplasm. Forms a ternary complex with CDK2 and CDKN1B; CDKN1B inhibits the kinase activity of CDK2 through conformational rearrangements. Interacts with INCA1. Polyubiquitinated via 'Lys-11'-linked ubiquitin by the anaphase-promoting complex (APC/C), leading to its degradation by the proteasome. Deubiquitinated and stabilized by USP37 enables entry into S phase. Ubiquitinated during the G1 phase by the SCF(FBXO31) complex, leading to its proteasomal degradation.

The protein localises to the nucleus. It localises to the cytoplasm. In terms of biological role, cyclin which controls both the G1/S and the G2/M transition phases of the cell cycle. Functions through the formation of specific serine/threonine kinase holoenzyme complexes with the cyclin-dependent protein kinases CDK1 and CDK2. The cyclin subunit confers the substrate specificity of these complexes and differentially interacts with and activates CDK1 and CDK2 throughout the cell cycle. This chain is Cyclin-A2, found in Mesocricetus auratus (Golden hamster).